An 894-amino-acid chain; its full sequence is MRHGSQNSEHPDSFGARDVIEVAGESFEIFRLLNAVPSAGSLPYSLRILLENLLRHEDGVHVHAGLVDALAAWDPRGPAPEILFHPARVVMQDYSGVPCLVDLAAMREAFVRLGGAAETLSPQVPVDLVVDHSVMADVFGTPDAYARNAALDHARNRERYELLRWAEATFDRLRIVPPNTGIIHQVNLERLAGVVIADDTGSLPALYPDTVVGTDSHTPMVNGLGVLGWGVGGIEAVAAVLGRPLTLRVPKVIGCELTGRPADGVTATDIVLTLTERLRAHGVVGAYIEFNGPGLAALSAADRATIANMCPEYGATAALFPVDDEVLRYLRATGRPERHLDLVRAYAETQGLWYDPAAAATIRYTERVRFDLASVVPSIAGPRRPQDRVPLATTRTAFAEAVSEVNGGTARRAEVTAPDGSRHTLGDGAVVLAAITSCTNTSNPALMIAAGLLARKAVELGLQPRPWVKSTLAPGSAAVMEYLARAGLDTYLDKLGFSLVAYGCTSCIGNSGPLPESVAGAVRESGLASVAVLSGNRNFEGRINPDVRMNYLASPPLVVAYALAGTMDIDLTTEPLGTGSDGRPVTLADIWPDSREIDEVARTAVDPGTYTQMYDSLMAGDERWRALPAHPQQLFPWAEDSTYIAPPPYFVGTTARPRPLDDIRGARVLADLGDSVTTDHISPAGGIPAHSAAGVFLRELGVPPGDFNSYGARRCNHEVLLRGLFSNPRLRNRLAAGKTGGHTVNHLTGELTTMYEAAVAYQEAGVPLVVLAGREYGTGSSRDWAAKGPALIGVRAVIAESFERIHRSNLVGMGILPLEFPAGQNARTLGLTGAEEFDISGVREFSESVPRTVRVTAGAVSFDAVVRVDTAMEAEFIRHGGIMPFTLRGLLESA.

[4Fe-4S] cluster-binding residues include Cys-438, Cys-504, and Cys-507.

This sequence belongs to the aconitase/IPM isomerase family. Requires [4Fe-4S] cluster as cofactor.

The catalysed reaction is phosphinomethylmalate = phosphinomethylisomalate. The enzyme catalyses phosphinomethylmalate = 2-(phosphinatomethylidene)butanedioate + H2O. It catalyses the reaction 2-(phosphinatomethylidene)butanedioate + H2O = phosphinomethylisomalate. The protein operates within secondary metabolite biosynthesis; bialaphos biosynthesis. Isomerase involved in the biosynthesis of phosphinothricin tripeptide (PTT), also known as bialaphos (BA), a natural-product antibiotic and potent herbicide. Probably catalyzes the isomerization of phosphinomethylmalate to phosphinomethylisomalate. Shows no standard aconitase activity with citrate as a substrate and is not able to complement an acnA mutant. This Streptomyces viridochromogenes (strain DSM 40736 / JCM 4977 / BCRC 1201 / Tue 494) protein is Phosphinomethylmalate isomerase.